The following is a 1056-amino-acid chain: E3 SUMO-protein ligase ZNF451 (1056 aa).

The segment at 1–39 (MGDPGPEIIESVPPAGPEASESTTDENEDDIQFVSEGPL) is disordered. The tract at residues 1–246 (MGDPGPEIIE…AADGHSNSLL (246 aa)) is sufficient for E3 SUMO-protein ligase activity. The interval 1-344 (MGDPGPEIIE…RVRCQNAGPV (344 aa)) is important for interaction with SUMO1 and SUMO2. An interaction with SUMO2 1 region spans residues 30–37 (DIQFVSEG). The short motif at 38–41 (PLRP) is the PLRP element. The interaction with SUMO2 2 stretch occupies residues 42–50 (VLEYIDLVS). Glycyl lysine isopeptide (Lys-Gly) (interchain with G-Cter in SUMO2) cross-links involve residues K75, K77, K106, K139, and K153. At S155 the chain carries Phosphoserine. R158 is subject to Omega-N-methylarginine. A Glycyl lysine isopeptide (Lys-Gly) (interchain with G-Cter in SUMO2) cross-link involves residue K167. The segment at 168-521 (PILCPIMHCN…HMSRFHGGAH (354 aa)) is important for interaction with SMAD4. The segment at 169–195 (ILCPIMHCNKEFDNGHLLLGHLKRFDH) adopts a C2H2-type 1 zinc-finger fold. The C2H2-type 2; degenerate zinc finger occupies 212-234 (FACAVCYEHFVTQQQYKDHLLSR). The C2H2-type 3 zinc-finger motif lies at 253–277 (YACPQCFLLFSTKDECLKHMSTKNH). Glycyl lysine isopeptide (Lys-Gly) (interchain with G-Cter in SUMO2) cross-links involve residues K270, K275, K283, K288, K301, and K309. The C2H2-type 4; atypical zinc finger occupies 315-338 (VKCVACHQTLRSHMELTAHFRVRC). The C2H2-type 5 zinc-finger motif lies at 362-385 (GYCSDCNQVFMDVASTQSHKNSGH). K420 participates in a covalent cross-link: Glycyl lysine isopeptide (Lys-Gly) (interchain with G-Cter in SUMO2). Phosphoserine is present on S429. K431 participates in a covalent cross-link: Glycyl lysine isopeptide (Lys-Gly) (interchain with G-Cter in SUMO2). 2 consecutive C2H2-type zinc fingers follow at residues 494-517 (YKCV…SRFH) and 527-550 (FWCR…TEFH). Residues K539 and K583 each participate in a glycyl lysine isopeptide (Lys-Gly) (interchain with G-Cter in SUMO2) cross-link. Residues 604–629 (WQCRICEDMFESQECVKQHCMSLTSH) form a C2H2-type 8; atypical zinc finger. C2H2-type zinc fingers lie at residues 634-657 (YSCA…QDEH) and 665-688 (YFCG…KEHH). Residue K645 forms a Glycyl lysine isopeptide (Lys-Gly) (interchain with G-Cter in SUMO2) linkage. K704 participates in a covalent cross-link: Glycyl lysine isopeptide (Lys-Gly) (interchain with G-Cter in SUMO1); alternate. K704 is covalently cross-linked (Glycyl lysine isopeptide (Lys-Gly) (interchain with G-Cter in SUMO2); alternate). Residues K729 and K746 each participate in a glycyl lysine isopeptide (Lys-Gly) (interchain with G-Cter in SUMO2) cross-link. C2H2-type zinc fingers lie at residues 751-774 (FRCS…CQVH) and 787-810 (IKCG…HRKH). Residues K788, K815, K843, K849, K947, K988, and K989 each participate in a glycyl lysine isopeptide (Lys-Gly) (interchain with G-Cter in SUMO2) cross-link. Disordered regions lie at residues 806-830 (FHRK…STCQ) and 839-858 (EKNL…KGAE). Positions 849 to 858 (KHSDVEKGAE) are enriched in basic and acidic residues. The segment at 1019–1045 (KECDSDDSSGMKGSPAEELRATEDVEL) is disordered. Over residues 1033–1045 (PAEELRATEDVEL) the composition is skewed to basic and acidic residues. The important for ubiquitin binding stretch occupies residues 1045–1056 (LEEAIRRSLEEM).

Belongs to the krueppel C2H2-type zinc-finger protein family. In terms of assembly, homooligomer. Interacts (via N-terminal region) with SUMO1. Interacts (via N-terminal region) with SUMO2. Interacts simultaneously with two SUMO2 chains. Identified in a complex with SUMO2 and UBE2I/UBC9, where one ZNF451 interacts with one UBE2I/UBC9 and two SUMO2 chains, one bound to the UBE2I/UBC9 active site and the other to another region of the same UBE2I/UBC9 molecule. Interacts (via C-terminus) with ubiquitin. Interacts (via N-terminal zinc-finger domains) with SMAD4 (via MH2 domain). Interacts with SMAD2 and SMAD3. Identified in a complex that contains at least ZNF451, SMAD2, SMAD3 and SMAD4. Interacts with EP300. Inhibits interaction between EP300 and the SMAD4 complex. Interacts with SIMC1. Post-translationally, sumoylated. Predominantly sumoylated on the N-terminal region that is important for interaction with SUMO1 and SUMO2. Sumoylation is important for localization in nuclear granules; desumoylation leads to diffuse nucleoplasmic location. Autosumoylated (in vitro). Sumoylation enhances E3 SUMO-protein ligase activity.

The protein resides in the nucleus. It is found in the PML body. The protein localises to the nucleoplasm. Its pathway is protein modification; protein sumoylation. Functionally, E3 SUMO-protein ligase; has a preference for SUMO2 and SUMO3 and facilitates UBE2I/UBC9-mediated sumoylation of target proteins. Plays a role in protein SUMO2 modification in response to stress caused by DNA damage and by proteasome inhibitors (in vitro). Required for MCM4 sumoylation. Has no activity with SUMO1. Preferentially transfers an additional SUMO2 chain onto the SUMO2 consensus site 'Lys-11'. Negatively regulates transcriptional activation mediated by the SMAD4 complex in response to TGF-beta signaling. Inhibits EP300-mediated acetylation of histone H3 at 'Lys-9'. Plays a role in regulating the transcription of AR targets. In Mus musculus (Mouse), this protein is E3 SUMO-protein ligase ZNF451 (Znf451).